Consider the following 388-residue polypeptide: Amylovoran biosynthesis protein AmsL (388 aa).

6 helical membrane passes run 24–44 (VLLSMLTGLLLVAIAWPISWF), 47–67 (LPQLGGLIMLTSLNFLVLGSL), 97–117 (FTVILLYYSPLGVSAVILGLF), 231–251 (FVIMLFSAIMYLAIGILSPVI), 297–317 (FYWNVVASIIVVLVLASVWIW), and 359–379 (ISVSAVFVGIIALVSHYNLFI).

It belongs to the polysaccharide synthase family.

The protein resides in the cell membrane. Its pathway is glycan metabolism; exopolysaccharide biosynthesis. Its function is as follows. Involved in the biosynthesis of amylovoran which functions as a virulence factor. In Erwinia amylovora (Fire blight bacteria), this protein is Amylovoran biosynthesis protein AmsL (amsL).